A 594-amino-acid polypeptide reads, in one-letter code: Bifunctional lycopene cyclase/phytoene synthase (594 aa).

Residues 1–249 form a lycopene beta-cyclase region; it reads MGLDYLMVHV…VVFGIAAMHN (249 aa). 7 consecutive transmembrane segments (helical) span residues 3–23, 35–55, 77–97, 130–150, 153–173, 176–196, and 227–247; these read LDYL…LTIL, KIVL…SYLI, LEEV…YIIF, LGTL…YIGG, MYLG…WVLM, FLLA…TLYL, and IEEA…IAAM. A phytoene synthase region spans residues 256–594; sequence YKAFISTTAM…RFKRAWLAML (339 aa).

The protein in the N-terminal section; belongs to the lycopene beta-cyclase family. In the C-terminal section; belongs to the phytoene/squalene synthase family.

The protein localises to the membrane. It carries out the reaction all-trans-lycopene = gamma-carotene. The enzyme catalyses gamma-carotene = all-trans-beta-carotene. It catalyses the reaction 2 (2E,6E,10E)-geranylgeranyl diphosphate = 15-cis-phytoene + 2 diphosphate. It functions in the pathway carotenoid biosynthesis; beta-carotene biosynthesis. The protein operates within carotenoid biosynthesis; phytoene biosynthesis; all-trans-phytoene from geranylgeranyl diphosphate: step 1/1. Bifunctional enzyme that catalyzes the reactions from geranylgeranyl diphosphate to phytoene (phytoene synthase) and lycopene to beta-carotene via the intermediate gamma-carotene (lycopene cyclase). The chain is Bifunctional lycopene cyclase/phytoene synthase from Arthroderma gypseum (strain ATCC MYA-4604 / CBS 118893) (Microsporum gypseum).